A 195-amino-acid polypeptide reads, in one-letter code: AP-4-A phosphorylase (195 aa).

The segment covering 1-17 has biased composition (basic and acidic residues); it reads MSDEDRTDRATEDHTIF. The disordered stretch occupies residues 1–20; the sequence is MSDEDRTDRATEDHTIFDRG. Positions 57–166 constitute an HIT domain; it reads PFTEIPQLSD…VPRWGGDANF (110 aa). The short motif at 151 to 155 is the Histidine triad motif element; that stretch reads HLHVH. H153 acts as the Tele-AMP-histidine intermediate in catalysis.

As to quaternary structure, homotetramer. A divalent metal cation serves as cofactor.

It carries out the reaction ADP + ATP + H(+) = P(1),P(4)-bis(5'-adenosyl) tetraphosphate + phosphate. Its function is as follows. Catabolizes diadenosine 5',5'''-P1,P4-tetraphosphate (Ap4A) into ADP and ATP. This Mycobacterium tuberculosis (strain CDC 1551 / Oshkosh) protein is AP-4-A phosphorylase.